The primary structure comprises 219 residues: Ribose-5-phosphate isomerase A (219 aa).

Substrate-binding positions include 29–32 (TGST), 82–85 (DGAD), and 95–98 (KGGG). The active-site Proton acceptor is the glutamate 104. Residue lysine 122 coordinates substrate.

This sequence belongs to the ribose 5-phosphate isomerase family. Homodimer.

The catalysed reaction is aldehydo-D-ribose 5-phosphate = D-ribulose 5-phosphate. Its pathway is carbohydrate degradation; pentose phosphate pathway; D-ribose 5-phosphate from D-ribulose 5-phosphate (non-oxidative stage): step 1/1. Functionally, catalyzes the reversible conversion of ribose-5-phosphate to ribulose 5-phosphate. This is Ribose-5-phosphate isomerase A from Chromobacterium violaceum (strain ATCC 12472 / DSM 30191 / JCM 1249 / CCUG 213 / NBRC 12614 / NCIMB 9131 / NCTC 9757 / MK).